A 544-amino-acid chain; its full sequence is MKNFILLVFLFLLVSNSLGKSNKKDDQSPEIVKINSNDHLPLYYEIIISGHFSIDKTGLTVTYLGDKIHDFEFIKGQVLNVTGEPQNNPIPTVSINPDQLNDDRFEVSDSSDFSKQTPTPTPTPTSKPTSTPTSTPSQTIPPTVSPTVPPQTTSPTSKPTSTPTPTSTPTPTSTPTPTSQTIPPPTTTPKPTKSSKPTKTPVPTPTPTRPSSSVSKGYDIIKFNITDIEDIEMGKITISYKNGQSSSKHFQPNSIIKSIERTNSVGGVVEFKGSFFYTDDYEPSIKIGNKICETLTSSQTSIRCYLTNGTGCGYTITIDNLLNPIDNNGNSNLTYCYANPIIDKVIGYKDKKLTLITIIGKNFLNNATVIIEKPNGNKRNCSNVLLSTDTLFICELSKSYHTLSSPKTTNTTMLSFINNSPNSTVSNEIIEMISGYFQIKISTKPSTTDDDNNKNNDDGDSEIDSVGKSAVDSSKSNNNSGGGGNKKLYLLIILPTVLFIIVAALVAIFIKTRVSQNSGSKVNKNNNKKDSINVPFQMLDEITT.

A signal peptide spans Met-1–Gly-19. Topologically, residues Lys-20–Tyr-489 are extracellular. An N-linked (GlcNAc...) asparagine glycan is attached at Asn-80. Over residues Glu-84 to Gln-99 the composition is skewed to polar residues. The tract at residues Glu-84–Ser-215 is disordered. Composition is skewed to low complexity over residues Ser-126–Pro-142, Pro-150–Pro-165, and Pro-189–Lys-199. Asn-224, Asn-308, Asn-332, Asn-366, Asn-380, Asn-410, Asn-422, and Asn-478 each carry an N-linked (GlcNAc...) asparagine glycan. Residues Lys-444–Ser-480 form a disordered region. Residues Leu-490 to Ile-510 form a helical membrane-spanning segment. The Cytoplasmic segment spans residues Lys-511–Thr-544.

Post-translationally, N- and O-glycosylated.

The protein localises to the membrane. The protein is Glycoprotein gp100 (gppA) of Dictyostelium discoideum (Social amoeba).